The following is a 750-amino-acid chain: Pesticidal crystal protein Cry11Bb (750 aa).

Residues Gln672 to Val750 are disordered.

Belongs to the delta endotoxin family.

Its function is as follows. Promotes colloidosmotic lysis by binding to the midgut epithelial cells of mosquito larvae such as Aedes aegypti, Anopheles albimanus and Culex quinquefasciatus. In Bacillus thuringiensis subsp. medellin, this protein is Pesticidal crystal protein Cry11Bb (cry11Bb).